The chain runs to 72 residues: Antimicrobial peptide MeuNaTxbeta-4 (72 aa).

An N-terminal signal peptide occupies residues 1–5 (LIGVK). The region spanning 7–69 (EHGYLLDKYT…LWHYETNKCN (63 aa)) is the LCN-type CS-alpha/beta domain. 4 disulfide bridges follow: Cys-18–Cys-68, Cys-22–Cys-43, Cys-29–Cys-50, and Cys-33–Cys-52.

As to expression, expressed by the venom gland.

It is found in the secreted. Functionally, antimicrobial peptide with weak activity against both Gram-positive and -negative bacteria. Its antibiotic activity is potentiated by other antibacterial peptides such as Meucin-49. The polypeptide is Antimicrobial peptide MeuNaTxbeta-4 (Mesobuthus eupeus (Lesser Asian scorpion)).